The chain runs to 242 residues: 1-(5-phosphoribosyl)-5-[(5-phosphoribosylamino)methylideneamino] imidazole-4-carboxamide isomerase (242 aa).

D8 functions as the Proton acceptor in the catalytic mechanism. D129 functions as the Proton donor in the catalytic mechanism.

It belongs to the HisA/HisF family.

It is found in the cytoplasm. The enzyme catalyses 1-(5-phospho-beta-D-ribosyl)-5-[(5-phospho-beta-D-ribosylamino)methylideneamino]imidazole-4-carboxamide = 5-[(5-phospho-1-deoxy-D-ribulos-1-ylimino)methylamino]-1-(5-phospho-beta-D-ribosyl)imidazole-4-carboxamide. It participates in amino-acid biosynthesis; L-histidine biosynthesis; L-histidine from 5-phospho-alpha-D-ribose 1-diphosphate: step 4/9. The sequence is that of 1-(5-phosphoribosyl)-5-[(5-phosphoribosylamino)methylideneamino] imidazole-4-carboxamide isomerase from Dictyoglomus turgidum (strain DSM 6724 / Z-1310).